The primary structure comprises 437 residues: Lipopolysaccharide biosynthesis protein RfbH (437 aa).

The protein belongs to the DegT/DnrJ/EryC1 family. It depends on pyridoxal 5'-phosphate as a cofactor.

It functions in the pathway bacterial outer membrane biogenesis; LPS O-antigen biosynthesis. This Salmonella typhimurium (strain LT2 / SGSC1412 / ATCC 700720) protein is Lipopolysaccharide biosynthesis protein RfbH (rfbH).